A 139-amino-acid chain; its full sequence is D-ribose pyranase (139 aa).

The Proton donor role is filled by His20. Residues Asp28, His106, and 128–130 (YAN) contribute to the substrate site.

The protein belongs to the RbsD / FucU family. RbsD subfamily. As to quaternary structure, homodecamer.

Its subcellular location is the cytoplasm. It carries out the reaction beta-D-ribopyranose = beta-D-ribofuranose. The protein operates within carbohydrate metabolism; D-ribose degradation; D-ribose 5-phosphate from beta-D-ribopyranose: step 1/2. Its function is as follows. Catalyzes the interconversion of beta-pyran and beta-furan forms of D-ribose. The sequence is that of D-ribose pyranase from Escherichia coli O127:H6 (strain E2348/69 / EPEC).